The chain runs to 155 residues: SsrA-binding protein (155 aa).

The protein belongs to the SmpB family.

The protein resides in the cytoplasm. Required for rescue of stalled ribosomes mediated by trans-translation. Binds to transfer-messenger RNA (tmRNA), required for stable association of tmRNA with ribosomes. tmRNA and SmpB together mimic tRNA shape, replacing the anticodon stem-loop with SmpB. tmRNA is encoded by the ssrA gene; the 2 termini fold to resemble tRNA(Ala) and it encodes a 'tag peptide', a short internal open reading frame. During trans-translation Ala-aminoacylated tmRNA acts like a tRNA, entering the A-site of stalled ribosomes, displacing the stalled mRNA. The ribosome then switches to translate the ORF on the tmRNA; the nascent peptide is terminated with the 'tag peptide' encoded by the tmRNA and targeted for degradation. The ribosome is freed to recommence translation, which seems to be the essential function of trans-translation. In Streptococcus equi subsp. equi (strain 4047), this protein is SsrA-binding protein.